The primary structure comprises 137 residues: Small ribosomal subunit protein uS11 (137 aa).

The tract at residues 116 to 137 (EDVTPIPHDGTRRPGGKRGRRV) is disordered.

This sequence belongs to the universal ribosomal protein uS11 family. As to quaternary structure, part of the 30S ribosomal subunit.

Located on the platform of the 30S subunit. The protein is Small ribosomal subunit protein uS11 of Methanopyrus kandleri (strain AV19 / DSM 6324 / JCM 9639 / NBRC 100938).